Here is a 401-residue protein sequence, read N- to C-terminus: Probable tRNA sulfurtransferase (401 aa).

In terms of domain architecture, THUMP spans 63–168; that stretch reads TTAEQALSYL…EREAFLYGAR (106 aa). ATP-binding positions include 186–187, 211–212, R268, G290, and Q299; these read LL and YF.

Belongs to the ThiI family.

The protein localises to the cytoplasm. It catalyses the reaction [ThiI sulfur-carrier protein]-S-sulfanyl-L-cysteine + a uridine in tRNA + 2 reduced [2Fe-2S]-[ferredoxin] + ATP + H(+) = [ThiI sulfur-carrier protein]-L-cysteine + a 4-thiouridine in tRNA + 2 oxidized [2Fe-2S]-[ferredoxin] + AMP + diphosphate. The enzyme catalyses [ThiS sulfur-carrier protein]-C-terminal Gly-Gly-AMP + S-sulfanyl-L-cysteinyl-[cysteine desulfurase] + AH2 = [ThiS sulfur-carrier protein]-C-terminal-Gly-aminoethanethioate + L-cysteinyl-[cysteine desulfurase] + A + AMP + 2 H(+). Its pathway is cofactor biosynthesis; thiamine diphosphate biosynthesis. Functionally, catalyzes the ATP-dependent transfer of a sulfur to tRNA to produce 4-thiouridine in position 8 of tRNAs, which functions as a near-UV photosensor. Also catalyzes the transfer of sulfur to the sulfur carrier protein ThiS, forming ThiS-thiocarboxylate. This is a step in the synthesis of thiazole, in the thiamine biosynthesis pathway. The sulfur is donated as persulfide by IscS. This Treponema pallidum (strain Nichols) protein is Probable tRNA sulfurtransferase.